Consider the following 193-residue polypeptide: Mesogenin-1 (193 aa).

Positions 34–59 (GPFELNQASPSQSLSPAPSLESYSSS) are disordered. Low complexity predominate over residues 40-59 (QASPSQSLSPAPSLESYSSS). The bHLH domain occupies 124-178 (QRRRKASEREKLRMRTLADALHTLRNYLPPVYSQRGQPLTKIQTLKYTIKYIGEL).

The protein localises to the nucleus. Its function is as follows. Involved in specifying the paraxial, but not dorsal, mesoderm. May regulate the expression of T-box transcription factors required for mesoderm formation and differentiation. The chain is Mesogenin-1 (MSGN1) from Homo sapiens (Human).